A 208-amino-acid polypeptide reads, in one-letter code: MARYTGPSCRLCRRENMELFLKGERCYTDKCAIKRRNYPPGQHGQGRPKVSNYGVQLREKQKVRRIYGILEKQFRSYFQEADRLKGVTGENLLSLLERRLDNVVYRLGFAASRTEARILVRHNHFTLNGKKANIPSIQLRAGDVVELKEKSRKIACINESLDAVVRRGIPQWLELEKDAYKGVVKTLPVREDITMPIQEQLIVELYSK.

The S4 RNA-binding domain maps to 98–158 (RRLDNVVYRL…EKSRKIACIN (61 aa)).

The protein belongs to the universal ribosomal protein uS4 family. As to quaternary structure, part of the 30S ribosomal subunit. Contacts protein S5. The interaction surface between S4 and S5 is involved in control of translational fidelity.

Its function is as follows. One of the primary rRNA binding proteins, it binds directly to 16S rRNA where it nucleates assembly of the body of the 30S subunit. With S5 and S12 plays an important role in translational accuracy. The protein is Small ribosomal subunit protein uS4 of Geobacter sulfurreducens (strain ATCC 51573 / DSM 12127 / PCA).